The following is a 351-amino-acid chain: Homocitrate synthase (351 aa).

The Pyruvate carboxyltransferase domain occupies 23 to 272 (IKFCDTTLRD…KLPVDLDTTS (250 aa)).

Belongs to the alpha-IPM synthase/homocitrate synthase family.

It carries out the reaction acetyl-CoA + 2-oxoglutarate + H2O = (2R)-homocitrate + CoA + H(+). In terms of biological role, this protein is a Fe-Mo-cofactor biosynthetic component. This Frankia alni protein is Homocitrate synthase (nifV).